Reading from the N-terminus, the 178-residue chain is Small ribosomal subunit protein uS5 (178 aa).

The S5 DRBM domain maps to 13-76 (LEERVVQINR…EAAKRNLIRV (64 aa)). The interval 156–178 (ASRRDMTPQELMERRTRRETEAA) is disordered.

The protein belongs to the universal ribosomal protein uS5 family. Part of the 30S ribosomal subunit. Contacts proteins S4 and S8.

Functionally, with S4 and S12 plays an important role in translational accuracy. Located at the back of the 30S subunit body where it stabilizes the conformation of the head with respect to the body. The protein is Small ribosomal subunit protein uS5 of Chloroflexus aurantiacus (strain ATCC 29364 / DSM 637 / Y-400-fl).